The following is a 179-amino-acid chain: Large ribosomal subunit protein uL5 (179 aa).

It belongs to the universal ribosomal protein uL5 family. As to quaternary structure, part of the 50S ribosomal subunit; part of the 5S rRNA/L5/L18/L25 subcomplex. Contacts the 5S rRNA and the P site tRNA. Forms a bridge to the 30S subunit in the 70S ribosome.

This is one of the proteins that bind and probably mediate the attachment of the 5S RNA into the large ribosomal subunit, where it forms part of the central protuberance. In the 70S ribosome it contacts protein S13 of the 30S subunit (bridge B1b), connecting the 2 subunits; this bridge is implicated in subunit movement. Contacts the P site tRNA; the 5S rRNA and some of its associated proteins might help stabilize positioning of ribosome-bound tRNAs. This chain is Large ribosomal subunit protein uL5, found in Erwinia tasmaniensis (strain DSM 17950 / CFBP 7177 / CIP 109463 / NCPPB 4357 / Et1/99).